Reading from the N-terminus, the 553-residue chain is MDEVDKIIMHQLHQVDAGIEPTDELASFTPELVVRAVSSCLTEIRPELEVPRSLPGGAMAQRFSVATGLAERCKESGYHGDIGYQTFLYPNPIELRRLLMFLIEQLPRERQATDDLTGKSHPLSGREMLQRQIRKKLTAQLKAMWVPQFCRAVGNRKSHGCSSLCIDFRPKLNLNVPSANLEERTKEVQQYFDQQAPNLFQQTASSSYDLIASVLHKNDLERWGQGLTDSGMFLLASEDPVIPMVLATEKPSATAAEMTPLEELTDEVQKLRTQCETLLGERKAYTARIGALKQRESEATKELADIQPLLKLHERTCLVLADPEQNVTKLEALLQATEAKRRTLTQQWQDYRLPLLETLETLKTAKEAQHVQSIRSGIEQLEQELKEKTQQHNDLNTALRTATQSLAPRKEYTRRIHEFIGNIRKQRADIFKVLDDTRQLQKQLNVVGAQLQRQFNYTDDLLFQSAKHDLHAKKAYKLLAQLHANCSELVECVALTGNVTKQIRELEVQIDGEKLKNVLTSLQQITGDIQKFEQSIQELQSQISTMENGVAKA.

Coiled-coil stretches lie at residues 261 to 404 and 498 to 553; these read LEEL…TATQ and NVTK…VAKA.

This sequence belongs to the CCDC22 family.

The sequence is that of Coiled-coil domain-containing protein 22 homolog from Drosophila pseudoobscura pseudoobscura (Fruit fly).